We begin with the raw amino-acid sequence, 131 residues long: UPF0102 protein YraN (131 aa).

Polar residues predominate over residues 1-19; the sequence is MATVPTRSGSPRQLTTKQT. The interval 1–20 is disordered; that stretch reads MATVPTRSGSPRQLTTKQTG.

It belongs to the UPF0102 family.

The protein is UPF0102 protein YraN of Escherichia coli (strain 55989 / EAEC).